The sequence spans 552 residues: MFCIQCEQTIRTPAGNGCSYSQGMCGKLAETSDLQDLLIYVLQGVSAYAVKAREFDIIDHEIDTFVPKAFFATLTNVNFDDARLVEYVEQANAYRGRLQDAYETACTAKGVTPEQMSAPAQLILATSKPEMITQAAQAAPNRGDVHEDILGLRLLCLYGLKGAAAYMEHARVLSQTNDEVAGQFHEIMAFLGEDSVDVDKLFATSMEIGQLNYKVMAMLDEGETESFGHPEPTQVNTVAVKGKAILVSGHDMVDLELILKQTEGKGINVFTHGEMLPALAYPEFKKYPHLVGNYGSAWQNQQKEFANFPGAVVMTSNCIIDPNVGSYADRIFTRSIVGWPGVTHLVGDDFTPVIEKALALDGFIYDEIPHLITIGFARNALMAAAPAVIDNVKNGSIKHFFLVGGCDGDKAERSYFTDIATQAPDDSVILTLGCGKYKFNKLEFGDINGIPRLLDIGQCNDSYSAIQLAIALSEAFECEINELPLSIVLSWFEQKAIVVLLTLLSLGVKNIRTGPTPPAFLTPNLLKILEDKFGLRNTTTVEEDLKTILNVA.

[2Fe-2S] cluster is bound by residues Cys-3, Cys-6, Cys-18, and Cys-25. Hybrid [4Fe-2O-2S] cluster-binding residues include His-250, Glu-274, Cys-318, Cys-406, Cys-434, Cys-459, Glu-493, and Lys-495. Cys-406 is modified (cysteine persulfide).

The protein belongs to the HCP family. [2Fe-2S] cluster serves as cofactor. Hybrid [4Fe-2O-2S] cluster is required as a cofactor.

The protein resides in the cytoplasm. It carries out the reaction A + NH4(+) + H2O = hydroxylamine + AH2 + H(+). Its function is as follows. Catalyzes the reduction of hydroxylamine to form NH(3) and H(2)O. In Shewanella sediminis (strain HAW-EB3), this protein is Hydroxylamine reductase.